The primary structure comprises 202 residues: Imidazoleglycerol-phosphate dehydratase (202 aa).

This sequence belongs to the imidazoleglycerol-phosphate dehydratase family.

Its subcellular location is the cytoplasm. The enzyme catalyses D-erythro-1-(imidazol-4-yl)glycerol 3-phosphate = 3-(imidazol-4-yl)-2-oxopropyl phosphate + H2O. Its pathway is amino-acid biosynthesis; L-histidine biosynthesis; L-histidine from 5-phospho-alpha-D-ribose 1-diphosphate: step 6/9. The polypeptide is Imidazoleglycerol-phosphate dehydratase (Brucella abortus (strain S19)).